A 347-amino-acid polypeptide reads, in one-letter code: N-acetyl-gamma-glutamyl-phosphate reductase (347 aa).

The active site involves C150.

This sequence belongs to the NAGSA dehydrogenase family. Type 1 subfamily.

It is found in the cytoplasm. The enzyme catalyses N-acetyl-L-glutamate 5-semialdehyde + phosphate + NADP(+) = N-acetyl-L-glutamyl 5-phosphate + NADPH + H(+). It functions in the pathway amino-acid biosynthesis; L-arginine biosynthesis; N(2)-acetyl-L-ornithine from L-glutamate: step 3/4. Its function is as follows. Catalyzes the NADPH-dependent reduction of N-acetyl-5-glutamyl phosphate to yield N-acetyl-L-glutamate 5-semialdehyde. The chain is N-acetyl-gamma-glutamyl-phosphate reductase from Leifsonia xyli subsp. xyli (strain CTCB07).